The following is a 318-amino-acid chain: MAAAAAAAAEQQSSNGPVKKSMREKAVERRNVNKEHNSNFKAGYIPIDEDRLHKTGLRGRKGNLAICVIVLLFLLAVINLIITLVIWAVIRIGPNGCDSMEFHESGLLRFKQVSDMGVIHPLYKSTVGGRRNENLVITGNNQPIVFQQGTTKLSVEKNKTSITSDIGMQFFDPRTQNILFSTDYETHEFHLPSGVKSLNVQKASTERITSNATSDLNIKVDGRAIVRGNEGVFIMGKTIEFHMGGNMELKAENSIILNGTVMVSTTRLPSSSSADQLGGGDWVRYKLCMCADGTLFKVQVTGQNVGCQVSDNPCGNTH.

The tract at residues 1–32 (MAAAAAAAAEQQSSNGPVKKSMREKAVERRNV) is disordered. Topologically, residues 1-65 (MAAAAAAAAE…GLRGRKGNLA (65 aa)) are cytoplasmic. Positions 21-32 (SMREKAVERRNV) are enriched in basic and acidic residues. A helical; Signal-anchor for type II membrane protein transmembrane segment spans residues 66–86 (ICVIVLLFLLAVINLIITLVI). Topologically, residues 87–318 (WAVIRIGPNG…VSDNPCGNTH (232 aa)) are extracellular. N-linked (GlcNAc...) asparagine glycans are attached at residues asparagine 158, asparagine 211, and asparagine 258. Disulfide bonds link cysteine 288-cysteine 314 and cysteine 290-cysteine 307.

The protein belongs to the sarcoglycan beta/delta/gamma/zeta family. In terms of assembly, cross-link to form 2 major subcomplexes: one consisting of SGCB, SGCD and SGCG and the other consisting of SGCB and SGCD. The association between SGCB and SGCG is particularly strong while SGCA is loosely associated with the other sarcoglycans. Post-translationally, disulfide bonds are present.

The protein localises to the cell membrane. Its subcellular location is the sarcolemma. It is found in the cytoplasm. It localises to the cytoskeleton. Functionally, component of the sarcoglycan complex, a subcomplex of the dystrophin-glycoprotein complex which forms a link between the F-actin cytoskeleton and the extracellular matrix. This Oryctolagus cuniculus (Rabbit) protein is Beta-sarcoglycan (SGCB).